The primary structure comprises 451 residues: Velvet complex subunit 2 (451 aa).

Disordered regions lie at residues 1–95 (MNTT…PRSI), 205–312 (PGQS…QTNP), and 426–451 (PIRKDGKDGPGKGGKDGSRGDDDDDY). 3 stretches are compositionally biased toward polar residues: residues 18–28 (TMPSLHDTTYR), 40–62 (MPQTMASQHSTISAYEQYNNSLP), and 205–217 (PGQSQREPTSPTY). One can recognise a Velvet domain in the interval 92-428 (PRSITVDGRK…ATQGIKIPIR (337 aa)). A compositionally biased stretch (low complexity) spans 267–283 (PQQSNYYYPQPSQSIPS). Residues 427–445 (IRKDGKDGPGKGGKDGSRG) are compositionally biased toward basic and acidic residues.

This sequence belongs to the velvet family. VelB subfamily. As to quaternary structure, component of the heterotrimeric velvet complex composed of LAE1, VEL1 and VEL2; VEL1 acting as a bridging protein between LAE1 and VEL2. Forms a heterodimeric complex with VOS1; the formation of the VEL2-VOS1 complex is light-dependent.

The protein localises to the nucleus. It is found in the cytoplasm. In terms of biological role, component of the velvet transcription factor complex that controls sexual/asexual developmental ratio in response to light, promoting sexual development in the darkness while stimulating asexual sporulation under illumination. The velvet complex acts as a global regulator for secondary metabolite gene expression. Component of the VEL2-VOS1 heterodimeric complex that plays a dual role in activating genes associated with spore maturation and repressing certain development-associated genes. The VEL2-VOS1 complex binds DNA through the DNA-binding domain of VOS1 that recognizes an 11-nucleotide consensus sequence 5'-CTGGCCGCGGC-3' consisting of two motifs in the promoters of key developmental regulatory genes. Controls the expression of the oxalic acid and melanin gene clusters. Involved in the resistance to oxidative stress. Required for full virulence. This is Velvet complex subunit 2 from Botryotinia fuckeliana (strain B05.10) (Noble rot fungus).